Consider the following 357-residue polypeptide: Phenylalanine--tRNA ligase alpha subunit (357 aa).

Glutamate 258 contributes to the Mg(2+) binding site.

It belongs to the class-II aminoacyl-tRNA synthetase family. Phe-tRNA synthetase alpha subunit type 1 subfamily. As to quaternary structure, tetramer of two alpha and two beta subunits. Requires Mg(2+) as cofactor.

Its subcellular location is the cytoplasm. The catalysed reaction is tRNA(Phe) + L-phenylalanine + ATP = L-phenylalanyl-tRNA(Phe) + AMP + diphosphate + H(+). This Caulobacter vibrioides (strain ATCC 19089 / CIP 103742 / CB 15) (Caulobacter crescentus) protein is Phenylalanine--tRNA ligase alpha subunit.